Consider the following 383-residue polypeptide: Outer membrane protein assembly factor BamB (383 aa).

A signal peptide spans 1 to 23 (MMLLKRCNRRALVALAAVLLLAA). Cysteine 24 carries N-palmitoyl cysteine lipidation. Cysteine 24 carries the S-diacylglycerol cysteine lipid modification.

It belongs to the BamB family. In terms of assembly, part of the Bam complex.

It is found in the cell outer membrane. Part of the outer membrane protein assembly complex, which is involved in assembly and insertion of beta-barrel proteins into the outer membrane. This chain is Outer membrane protein assembly factor BamB, found in Alkalilimnicola ehrlichii (strain ATCC BAA-1101 / DSM 17681 / MLHE-1).